The primary structure comprises 194 residues: HTH-type transcriptional regulator BetI (194 aa).

Residues 8 to 68 form the HTH tetR-type domain; that stretch reads EIRRAQLIDA…ATMRHVLRDL (61 aa). A DNA-binding region (H-T-H motif) is located at residues 31 to 50; that stretch reads TLASVAQRANISTGIVSHYF.

It participates in amine and polyamine biosynthesis; betaine biosynthesis via choline pathway [regulation]. Repressor involved in the biosynthesis of the osmoprotectant glycine betaine. It represses transcription of the choline transporter BetT and the genes of BetAB involved in the synthesis of glycine betaine. The protein is HTH-type transcriptional regulator BetI of Burkholderia cenocepacia (strain ATCC BAA-245 / DSM 16553 / LMG 16656 / NCTC 13227 / J2315 / CF5610) (Burkholderia cepacia (strain J2315)).